The chain runs to 93 residues: Cytochrome c oxidase polypeptide 6, mitochondrial (93 aa).

Topologically, residues 2-33 (STGNESYNLRYPKGFKGYPYNMYKLEGYGTPK) are mitochondrial matrix. A helical transmembrane segment spans residues 34–53 (GYITLIGVVATLTVSGLFFA). Residues 54 to 93 (KTRSNKREYPTHNKEWRAKTLAYAKETNADPIYQLPKDKI) lie on the Mitochondrial intermembrane side of the membrane.

The protein belongs to the cytochrome c oxidase IV family. As to quaternary structure, component of the cytochrome c oxidase (complex IV, CIV), a multisubunit enzyme composed of a catalytic core of 3 subunits and seevral supernumerary subunits. The complex exists as a monomer or a dimer and forms supercomplexes (SCs) in the inner mitochondrial membrane with ubiquinol-cytochrome c oxidoreductase (cytochrome b-c1 complex, complex III, CIII).

The protein localises to the mitochondrion inner membrane. It functions in the pathway energy metabolism; oxidative phosphorylation. In terms of biological role, component of the cytochrome c oxidase, the last enzyme in the mitochondrial electron transport chain which drives oxidative phosphorylation. The respiratory chain contains 3 multisubunit complexes succinate dehydrogenase (complex II, CII), ubiquinol-cytochrome c oxidoreductase (cytochrome b-c1 complex, complex III, CIII) and cytochrome c oxidase (complex IV, CIV), that cooperate to transfer electrons derived from NADH and succinate to molecular oxygen, creating an electrochemical gradient over the inner membrane that drives transmembrane transport and the ATP synthase. Cytochrome c oxidase is the component of the respiratory chain that catalyzes the reduction of oxygen to water. Electrons originating from reduced cytochrome c in the intermembrane space (IMS) are transferred via the dinuclear copper A center (CU(A)) of subunit 2 and heme A of subunit 1 to the active site in subunit 1, a binuclear center (BNC) formed by heme A3 and copper B (CU(B)). The BNC reduces molecular oxygen to 2 water molecules using 4 electrons from cytochrome c in the IMS and 4 protons from the mitochondrial matrix. The polypeptide is Cytochrome c oxidase polypeptide 6, mitochondrial (cxfA) (Dictyostelium discoideum (Social amoeba)).